Consider the following 184-residue polypeptide: ATP synthase subunit b, chloroplastic (184 aa).

A helical transmembrane segment spans residues 27–49 (LATNPINLSVVLGVLIFFGKGVL).

The protein belongs to the ATPase B chain family. F-type ATPases have 2 components, F(1) - the catalytic core - and F(0) - the membrane proton channel. F(1) has five subunits: alpha(3), beta(3), gamma(1), delta(1), epsilon(1). F(0) has four main subunits: a(1), b(1), b'(1) and c(10-14). The alpha and beta chains form an alternating ring which encloses part of the gamma chain. F(1) is attached to F(0) by a central stalk formed by the gamma and epsilon chains, while a peripheral stalk is formed by the delta, b and b' chains.

It is found in the plastid. The protein localises to the chloroplast thylakoid membrane. In terms of biological role, f(1)F(0) ATP synthase produces ATP from ADP in the presence of a proton or sodium gradient. F-type ATPases consist of two structural domains, F(1) containing the extramembraneous catalytic core and F(0) containing the membrane proton channel, linked together by a central stalk and a peripheral stalk. During catalysis, ATP synthesis in the catalytic domain of F(1) is coupled via a rotary mechanism of the central stalk subunits to proton translocation. Its function is as follows. Component of the F(0) channel, it forms part of the peripheral stalk, linking F(1) to F(0). The polypeptide is ATP synthase subunit b, chloroplastic (Pelargonium hortorum (Common geranium)).